The sequence spans 296 residues: Giardin subunit alpha-2 (296 aa).

4 Annexin repeats span residues 2–71 (PKLS…MDLF), 73–143 (DRHE…MEKW), 153–223 (GSPD…AHFA), and 226–293 (GMHK…TLWR).

This sequence belongs to the annexin family. Giardin subunit alpha subfamily.

The protein localises to the cytoplasm. Its subcellular location is the cytoskeleton. Functionally, giardins are involved in parasite attachment to the intestinal mucosa and in the cytoskeletal disassembly and reassembly that marks the transition from infectious trophozoite to transmissible cyst. They may interact with other cytoskeletal proteins such as microtubules in the microribbons or crossbridges, to maintain the integrity of the ventral disk. The polypeptide is Giardin subunit alpha-2 (Giardia intestinalis (Giardia lamblia)).